The sequence spans 728 residues: Probable ubiquitin-conjugating enzyme protein 17 (728 aa).

The span at 1–17 shows a compositional bias: low complexity; it reads MSSQASQRSSSTSAVAQ. 2 disordered regions span residues 1 to 23 and 123 to 155; these read MSSQ…RERR and SSRS…GSTR. Positions 402–568 constitute a UBC core domain; sequence DRTKRIAKEL…IEHATLNYAI (167 aa). The active-site Glycyl thioester intermediate is the Cys-495. Disordered regions lie at residues 649–678 and 709–728; these read PFAK…EAAA and RTQP…STSS. A compositionally biased stretch (basic and acidic residues) spans 658-678; it reads SERLKREQSEKEEKQKKEAAA. Over residues 710 to 728 the composition is skewed to polar residues; that stretch reads TQPTGDYSVPSVNEPSTSS.

The protein belongs to the ubiquitin-conjugating enzyme family.

The sequence is that of Probable ubiquitin-conjugating enzyme protein 17 (ubc-17) from Caenorhabditis elegans.